A 159-amino-acid polypeptide reads, in one-letter code: Protein-export protein SecB (159 aa).

Belongs to the SecB family. As to quaternary structure, homotetramer, a dimer of dimers. One homotetramer interacts with 1 SecA dimer.

The protein localises to the cytoplasm. In terms of biological role, one of the proteins required for the normal export of preproteins out of the cell cytoplasm. It is a molecular chaperone that binds to a subset of precursor proteins, maintaining them in a translocation-competent state. It also specifically binds to its receptor SecA. The chain is Protein-export protein SecB from Nitrosospira multiformis (strain ATCC 25196 / NCIMB 11849 / C 71).